Here is a 105-residue protein sequence, read N- to C-terminus: Thioredoxin (105 aa).

The Thioredoxin domain maps to 2 to 105 (VKQIDSKDAF…KLEATINEFV (104 aa)). Lysine 3 is subject to N6-acetyllysine. Lysine 8 carries the N6-succinyllysine modification. Catalysis depends on nucleophile residues cysteine 32 and cysteine 35. A disulfide bond links cysteine 32 and cysteine 35. Lysine 39 is modified (N6-acetyllysine). S-nitrosocysteine is present on residues cysteine 62 and cysteine 69. Cysteine 73 is modified (S-nitrosocysteine; alternate). At lysine 94 the chain carries N6-acetyllysine; alternate. Position 94 is an N6-succinyllysine; alternate (lysine 94).

It belongs to the thioredoxin family. As to quaternary structure, homodimer; disulfide-linked. Interacts with TXNIP through the redox-active site. Interacts with MAP3K5 and CASP3. Interacts with APEX1; the interaction stimulates the FOS/JUN AP-1 DNA-binding activity in a redox-dependent manner. In terms of processing, in the fully reduced protein, both Cys-69 and Cys-73 are nitrosylated in response to nitric oxide (NO). When two disulfide bonds are present in the protein, only Cys-73 is nitrosylated. Cys-73 can serve as donor for nitrosylation of target proteins.

The protein resides in the nucleus. The protein localises to the cytoplasm. Its subcellular location is the secreted. Functionally, participates in various redox reactions through the reversible oxidation of its active center dithiol to a disulfide and catalyzes dithiol-disulfide exchange reactions. Plays a role in the reversible S-nitrosylation of cysteine residues in target proteins, and thereby contributes to the response to intracellular nitric oxide. Nitrosylates the active site Cys of CASP3 in response to nitric oxide (NO), and thereby inhibits caspase-3 activity. Induces the FOS/JUN AP-1 DNA binding activity in ionizing radiation (IR) cells through its oxidation/reduction status and stimulates AP-1 transcriptional activity. This chain is Thioredoxin (TXN), found in Callithrix jacchus (White-tufted-ear marmoset).